A 67-amino-acid chain; its full sequence is Conotoxin LiC33 (67 aa).

A signal peptide spans 1 to 22 (MRCVPVFIILLLLSPSAPSVDA). Residues 23-48 (HPKTKDDVPLASFHDDAKRTLQRLWI) constitute a propeptide that is removed on maturation. Phe-63 is modified (phenylalanine amide). The propeptide occupies 65 to 67 (KGK).

This sequence belongs to the conotoxin T superfamily. Post-translationally, contains 2 disulfide bonds that can be either 'C1-C3, C2-C4' or 'C1-C4, C2-C3', since these disulfide connectivities have been observed for conotoxins with cysteine framework V (for examples, see AC P0DQQ7 and AC P81755). Expressed by the venom duct.

The protein localises to the secreted. This is Conotoxin LiC33 from Conus lividus (Livid cone).